The sequence spans 306 residues: Meiotically up-regulated gene 73 protein (306 aa).

7 consecutive transmembrane segments (helical) span residues Y28–F48, F59–G79, Y103–V123, I125–A145, W154–L174, F190–L210, and I224–M244.

This sequence belongs to the archaeal/bacterial/fungal opsin family.

The protein resides in the membrane. Has a role in meiosis. The protein is Meiotically up-regulated gene 73 protein (mug73) of Schizosaccharomyces pombe (strain 972 / ATCC 24843) (Fission yeast).